The chain runs to 200 residues: NAD(P)H dehydrogenase (quinone) (200 aa).

The 188-residue stretch at 4–191 (VLVLYYSMYG…DIARFQGKHV (188 aa)) folds into the Flavodoxin-like domain. Residues 10 to 15 (SMYGHI) and 79 to 81 (TRF) contribute to the FMN site. Residue tyrosine 12 participates in NAD(+) binding. Tryptophan 99 is a substrate binding site. FMN contacts are provided by residues 114–120 (STGTQHG) and histidine 135.

It belongs to the WrbA family. FMN serves as cofactor.

It catalyses the reaction a quinone + NADH + H(+) = a quinol + NAD(+). It carries out the reaction a quinone + NADPH + H(+) = a quinol + NADP(+). The polypeptide is NAD(P)H dehydrogenase (quinone) (Paraburkholderia phytofirmans (strain DSM 17436 / LMG 22146 / PsJN) (Burkholderia phytofirmans)).